We begin with the raw amino-acid sequence, 593 residues long: Transcriptional repressor p66-beta (593 aa).

S17 is subject to Phosphoserine. Glycyl lysine isopeptide (Lys-Gly) (interchain with G-Cter in SUMO2) cross-links involve residues K33, K66, and K97. The disordered stretch occupies residues 62–123 (ELPTKQDGSG…PERGRLTPSP (62 aa)). 2 stretches are compositionally biased toward basic and acidic residues: residues 74–100 (GYEE…KENI) and 108–118 (SARRSEPERGR). A Phosphothreonine modification is found at T120. Phosphoserine occurs at positions 122, 129, 134, and 135. Positions 140–194 (SRMEERLKAANLEMFKGKGIEERQQLIKQLRDELRLEEARLVLLKKLRQSQLQKE) form a coiled coil. K147 is covalently cross-linked (Glycyl lysine isopeptide (Lys-Gly) (interchain with G-Cter in SUMO2)). A CR1; interaction with MBD2 and MBD3 region spans residues 165 to 195 (LIKQLRDELRLEEARLVLLKKLRQSQLQKEN). Residue K199 forms a Glycyl lysine isopeptide (Lys-Gly) (interchain with G-Cter in SUMO2) linkage. S208 is subject to Phosphoserine. A disordered region spans residues 213-235 (SPAHVGQQGLSKLPSRPGAQGVE). K281 participates in a covalent cross-link: Glycyl lysine isopeptide (Lys-Gly) (interchain with G-Cter in SUMO2). Phosphoserine occurs at positions 333, 338, and 340. Residues 340–480 (SAMTDAANSQ…QEQEIEQRLQ (141 aa)) form a CR2; histone tail-binding region. Residues K353, K454, and K467 each participate in a glycyl lysine isopeptide (Lys-Gly) (interchain with G-Cter in SUMO2) cross-link. A GATA-type zinc finger spans residues 414–467 (RVEPFVCAQCRTDFTPHWKQEKNGKILCEQCMTSNQKKALKAEHTNRLKNAFVK). The stretch at 449–482 (QKKALKAEHTNRLKNAFVKALQQEQEIEQRLQQQ) forms a coiled coil. A Phosphoserine modification is found at S486. K498 is covalently cross-linked (Glycyl lysine isopeptide (Lys-Gly) (interchain with G-Cter in SUMO2)).

Homooligomer. Component of the nucleosome remodeling and deacetylase (NuRD) repressor complex, composed of core proteins MTA1, MTA2, MTA3, RBBP4, RBBP7, HDAC1, HDAC2, MBD2, MBD3, and peripherally associated proteins CDK2AP1, CDK2AP2, GATAD2A, GATAD2B, CHD3, CHD4 and CHD5. The exact stoichiometry of the NuRD complex is unknown, and some subunits such as MBD2 and MBD3, GATAD2A and GATAD2B, and CHD3, CHD4 and CHD5 define mutually exclusive NuRD complexes. Interacts with MBD2; this is required for the enhancement of MBD2-mediated repression and for targeting to the chromatin. Interacts with MBD3. Component of the MeCP1 histone deacetylase complex. Interacts with histone tails, including that of histones H2A, H2B, H3 and H4. Interacts with ERCC6. In terms of tissue distribution, widely expressed.

The protein localises to the nucleus speckle. Its subcellular location is the nucleus. It localises to the chromosome. Functionally, transcriptional repressor. Acts as a component of the histone deacetylase NuRD complex which participates in the remodeling of chromatin. Enhances MBD2-mediated repression. Efficient repression requires the presence of GATAD2A. Targets MBD3 to discrete loci in the nucleus. May play a role in synapse development. The polypeptide is Transcriptional repressor p66-beta (GATAD2B) (Homo sapiens (Human)).